The primary structure comprises 500 residues: MVNKSRMMPAVLAVAVVVAFLTTGCIRWSTQSRPVVNGPAAAEFAVALRNRVSTDAMMAHLSKLQDIANANDGTRAVGTPGYQASVDYVVNTLRNSGFDVQTPEFSARVFKAEKGVVTLGGNTVEARALEYSLGTPPDGVTGPLVAAPADDSPGCSPSDYDRLPVSGAVVLVDRGVCPFAQKEDAAAQRGAVALIIADNIDEQAMGGTLGANTDVKIPVVSVTKSVGFQLRGQSGPTTVKLTASTQSFKARNVIAQTKTGSSANVVMAGAHLDSVPEGPGINDNGSGVAAVLETAVQLGNSPHVSNAVRFAFWGAEEFGLIGSRNYVESLDIDALKGIALYLNFDMLASPNPGYFTYDGDQSLPLDARGQPVVPEGSAGIERTFVAYLKMAGKTAQDTSFDGRSDYDGFTLAGIPSGGLFSGAEVKKSAEQAELWGGTADEPFDPNYHQKTDTLDHIDRTALGINGAGVAYAVGLYAQDLGGPNGVPVMADRTRHLIAKP.

Residues 1–24 (MVNKSRMMPAVLAVAVVVAFLTTG) form the signal peptide. Cys-25 carries the N-palmitoyl cysteine lipid modification. The S-diacylglycerol cysteine moiety is linked to residue Cys-25. Residues 140–231 (VTGPLVAAPA…VTKSVGFQLR (92 aa)) enclose the PA domain. Residues His-271 and Asp-283 each contribute to the Zn(2+) site. Glu-316 functions as the Proton acceptor in the catalytic mechanism. Residues Glu-317, Asp-345, and His-448 each contribute to the Zn(2+) site.

Belongs to the peptidase M28 family. M28A subfamily. The cofactor is Zn(2+). Modified by Lgt on Cys-25 with an S-linked diacylglycerol with a mixture of C16 and C19 fatty acids (palmitic and tuberculostearic acid), signal peptide is removed by LspA, modified by Lnt with an amide-linked mixture of C16 and C19 fatty acids, expressed in M.bovis.

It is found in the cell membrane. It catalyses the reaction Release of an N-terminal amino acid, Xaa-|-Yaa-, in which Xaa is preferably Leu, but may be other amino acids including Pro although not Arg or Lys, and Yaa may be Pro. Amino acid amides and methyl esters are also readily hydrolyzed, but rates on arylamides are exceedingly low.. Functionally, an aminopeptidase; acts on free N-terminal amino groups with a very strong preference for Leu in the first position. The chain is Probable lipoprotein aminopeptidase LpqL (lpqL) from Mycobacterium tuberculosis (strain ATCC 25618 / H37Rv).